We begin with the raw amino-acid sequence, 603 residues long: UvrABC system protein C (603 aa).

In terms of domain architecture, GIY-YIG spans 13-92; the sequence is SSPGVYLMKD…IKQHHPKYNV (80 aa). Residues 205 to 240 form the UVR domain; that stretch reads EEVVKDLEKVIQKASDNLEFEQAANYYRTLSLIKQA.

This sequence belongs to the UvrC family. As to quaternary structure, interacts with UvrB in an incision complex.

Its subcellular location is the cytoplasm. The UvrABC repair system catalyzes the recognition and processing of DNA lesions. UvrC both incises the 5' and 3' sides of the lesion. The N-terminal half is responsible for the 3' incision and the C-terminal half is responsible for the 5' incision. This chain is UvrABC system protein C, found in Chlamydia pneumoniae (Chlamydophila pneumoniae).